Consider the following 271-residue polypeptide: Dermonecrotic toxin LarSicTox-alphaIB1c (271 aa).

Residue H3 is part of the active site. E23 and D25 together coordinate Mg(2+). The active-site Nucleophile is the H39. 2 disulfides stabilise this stretch: C43-C49 and C45-C188. D83 is a Mg(2+) binding site. Residue N248 is glycosylated (N-linked (GlcNAc...) asparagine).

This sequence belongs to the arthropod phospholipase D family. Class II subfamily. Mg(2+) serves as cofactor. As to expression, expressed by the venom gland.

It is found in the secreted. It carries out the reaction an N-(acyl)-sphingosylphosphocholine = an N-(acyl)-sphingosyl-1,3-cyclic phosphate + choline. It catalyses the reaction an N-(acyl)-sphingosylphosphoethanolamine = an N-(acyl)-sphingosyl-1,3-cyclic phosphate + ethanolamine. The enzyme catalyses a 1-acyl-sn-glycero-3-phosphocholine = a 1-acyl-sn-glycero-2,3-cyclic phosphate + choline. The catalysed reaction is a 1-acyl-sn-glycero-3-phosphoethanolamine = a 1-acyl-sn-glycero-2,3-cyclic phosphate + ethanolamine. In terms of biological role, dermonecrotic toxins cleave the phosphodiester linkage between the phosphate and headgroup of certain phospholipids (sphingolipid and lysolipid substrates), forming an alcohol (often choline) and a cyclic phosphate. This toxin acts on sphingomyelin (SM). It may also act on ceramide phosphoethanolamine (CPE), lysophosphatidylcholine (LPC) and lysophosphatidylethanolamine (LPE), but not on lysophosphatidylserine (LPS), and lysophosphatidylglycerol (LPG). It acts by transphosphatidylation, releasing exclusively cyclic phosphate products as second products. Induces dermonecrosis, hemolysis, increased vascular permeability, edema, inflammatory response, and platelet aggregation. In Loxosceles arizonica (Arizona brown spider), this protein is Dermonecrotic toxin LarSicTox-alphaIB1c.